The sequence spans 135 residues: Flagellar assembly factor FliW 1 (135 aa).

The protein belongs to the FliW family. Interacts with translational regulator CsrA and flagellin(s).

The protein resides in the cytoplasm. Functionally, acts as an anti-CsrA protein, binds CsrA and prevents it from repressing translation of its target genes, one of which is flagellin. Binds to flagellin and participates in the assembly of the flagellum. The chain is Flagellar assembly factor FliW 1 from Helicobacter pylori (strain HPAG1).